Here is a 641-residue protein sequence, read N- to C-terminus: MLHGRLRDILRLLMAAEAPVTSSFFAAQLNVTTRTVRNDIKELQGVLSGHGAFVQSVRGSGYKLRIDDEQVFRTLLQDEFQQKKGLPVLPEERMAYLMKRLLLADHYLKLDELAEELFISKSTLQTDLKEVKKRLLPYRIVMETRPNYGFKLRGDEVQMRYCMAEYIVDERETEIDVLNEKADILPKEEIEIIRSAILKKMKNDRIPLSNMGLNNLIIHIAIACKRIRTENYVSLFPKDMDHILHQKEYQAAEAIVKELESKLSVTFPKDETAYITMHLLGTKRMTQSQCGEDTFSIEEETDQLTLAMIKAVDRELKLGILHDKELKIGLALHMKPAISRNRYGMNLRNPMLAAIKEHYPLAFEAGIIAGIVIKEQTGIEIHENEIGYLALHFGAAIERKKTESPPKRCIIVCASGAGSAQLLREKLRSHFGKRLDILGTAEYYSLDQMSYESIDFVISTIPIKKELPVPVLKVNTILGGTDFTKIESILSDEKEKANRYLKKELVFFQEDLRSKEEVIQFLGQKVVECGFADEEIIDSIFEREDMSPTCFGNLVAIPHPLVPQTKTTFWAVCTLKKPIDWESQRVQFVCLLCVEKENKADLQSMYKLLGSILDDPAAMNQLIKCRSYQELSDVFDQKMLS.

PRD domains lie at 184–289 (ILPK…TQSQ) and 296–403 (SIEE…KKTE). Histidine 219, histidine 278, histidine 333, and histidine 392 each carry phosphohistidine; by HPr. Residues 407–498 (KRCIIVCASG…ILSDEKEKAN (92 aa)) enclose the PTS EIIB type-2 domain. At cysteine 413 the chain carries Phosphocysteine; by EIIA. The PTS EIIA type-2 domain occupies 499 to 638 (RYLKKELVFF…QELSDVFDQK (140 aa)). Histidine 559 carries the phosphohistidine; by EIIB modification.

Belongs to the transcriptional antiterminator BglG family.

The regulatory activity of LicR is modulated by phosphorylation and dephosphorylation of the various LicR domains. It becomes activated via phosphoryl group transfer from PEP, EI and HPr on the two conserved histidine residues in the PRD 2 domain, whereas phosphorylation of the EIIA-like domain on His-559 by the PTS EIIB component LicB inactivates LicR. Its function is as follows. Positive regulator of the licABCH operon. The polypeptide is Probable licABCH operon regulator (licR) (Bacillus subtilis (strain 168)).